Here is a 271-residue protein sequence, read N- to C-terminus: Putative phosphoenolpyruvate synthase regulatory protein (271 aa).

151 to 158 (GVSRSGKT) is an ADP binding site.

It belongs to the pyruvate, phosphate/water dikinase regulatory protein family. PSRP subfamily.

It carries out the reaction [pyruvate, water dikinase] + ADP = [pyruvate, water dikinase]-phosphate + AMP + H(+). The catalysed reaction is [pyruvate, water dikinase]-phosphate + phosphate + H(+) = [pyruvate, water dikinase] + diphosphate. Bifunctional serine/threonine kinase and phosphorylase involved in the regulation of the phosphoenolpyruvate synthase (PEPS) by catalyzing its phosphorylation/dephosphorylation. The sequence is that of Putative phosphoenolpyruvate synthase regulatory protein from Burkholderia orbicola (strain MC0-3).